The following is a 545-amino-acid chain: Chaperonin GroEL (545 aa).

ATP-binding positions include 30–33, K51, 87–91, G415, and D496; these read TLGP and DGTTT. The tract at residues 526 to 545 is disordered; it reads PEPKAPAGGMPDMGGMGGMM. The segment covering 536-545 has biased composition (gly residues); that stretch reads PDMGGMGGMM.

Belongs to the chaperonin (HSP60) family. In terms of assembly, forms a cylinder of 14 subunits composed of two heptameric rings stacked back-to-back. Interacts with the co-chaperonin GroES.

Its subcellular location is the cytoplasm. It catalyses the reaction ATP + H2O + a folded polypeptide = ADP + phosphate + an unfolded polypeptide.. Functionally, together with its co-chaperonin GroES, plays an essential role in assisting protein folding. The GroEL-GroES system forms a nano-cage that allows encapsulation of the non-native substrate proteins and provides a physical environment optimized to promote and accelerate protein folding. The polypeptide is Chaperonin GroEL (Paracoccus denitrificans (strain Pd 1222)).